Consider the following 473-residue polypeptide: MTAAESIAASINQIDEKKQKLKKAFDDLQAHRSLLSPSFNLSWSEIDSHFSSLQSSLFNRLQSAVTSSNSGNIETPTAVTTETPVLWPELRKFCEKNDGKGLGNYMIENSRKRLSINEELPNAIRCSENPAPLVLDAIEGSYHCSSPSSSSSARAIDVKRIFVLLLEALIEINANLTNDLRERARTIAYDWKPNIGNKPSEALGFLHLVAAFELGSLFSTEEICDYIFLISKYKQATTICKKIGLDRNRIGVLVQKFLDTGRLLVAIRFIYENEMVGEFEPVSILKTSLKNSREAAKRVCAEGNYSLKVQNEATDKELSALRAVIKVVKEKNIESEFMEEKLEECVKELEDQKAQRKRATKFNSPANPQQPQEQKVDNKRPRVANGSSMEYNLTIPPLRPQQQPPLLPTPSQILQVNPYGLLSSILPGVAVPYGNPRALFGSVPAPASRPVFYVQQTGYGMPPPQYRPPYYPQ.

2 coiled-coil regions span residues 3 to 35 (AAES…RSLL) and 306 to 361 (SLKV…RATK). Positions 356–384 (RKRATKFNSPANPQQPQEQKVDNKRPRVA) are disordered. Residues 361 to 373 (KFNSPANPQQPQE) are compositionally biased toward polar residues.

This sequence belongs to the Frigida family. As to expression, expressed at low levels throughout the plant, with slightly higher expression in developing seeds and the highest expression in pollen.

Functionally, inactive FRIGIDA-like 2 protein. The sequence is that of Inactive FRIGIDA-like protein 2 (FRL2) from Arabidopsis thaliana (Mouse-ear cress).